The chain runs to 251 residues: 3-deoxy-manno-octulosonate cytidylyltransferase (251 aa).

It belongs to the KdsB family.

It is found in the cytoplasm. It carries out the reaction 3-deoxy-alpha-D-manno-oct-2-ulosonate + CTP = CMP-3-deoxy-beta-D-manno-octulosonate + diphosphate. Its pathway is nucleotide-sugar biosynthesis; CMP-3-deoxy-D-manno-octulosonate biosynthesis; CMP-3-deoxy-D-manno-octulosonate from 3-deoxy-D-manno-octulosonate and CTP: step 1/1. It participates in bacterial outer membrane biogenesis; lipopolysaccharide biosynthesis. Activates KDO (a required 8-carbon sugar) for incorporation into bacterial lipopolysaccharide in Gram-negative bacteria. In Vibrio vulnificus (strain CMCP6), this protein is 3-deoxy-manno-octulosonate cytidylyltransferase.